The following is a 293-amino-acid chain: Protease HtpX (293 aa).

2 consecutive transmembrane segments (helical) span residues 4–24 (IALF…VLSL) and 34–54 (GLMI…LLMS). Residue histidine 139 participates in Zn(2+) binding. The active site involves glutamate 140. Histidine 143 lines the Zn(2+) pocket. A run of 2 helical transmembrane segments spans residues 158–178 (IVNT…SGFL) and 193–213 (LVYF…ASII). Glutamate 222 serves as a coordination point for Zn(2+).

It belongs to the peptidase M48B family. The cofactor is Zn(2+).

It localises to the cell inner membrane. In Pectobacterium carotovorum subsp. carotovorum (strain PC1), this protein is Protease HtpX.